The following is a 465-amino-acid chain: Sodium-coupled neutral amino acid transporter 7 (465 aa).

11 helical membrane passes run 54-74, 82-102, 128-148, 177-197, 204-224, 244-264, 275-295, 318-338, 370-390, 394-414, and 427-447; these read AVFIVVNAALGAGLLNFPAAF, AGVTLQMCMMAFIITGLVILA, ICELAIAVYTFGTCIAFLIII, FTITLTSVLIILPLSIPKEIG, TLSVIGTWYVTIIVIVKYIWP, FNAMPTICFGFQCHVSSVPVF, WWGVVTISMIICLFVYTGTGV, VAVAIARAFIIICVVTSYPIL, ILQTLVWFCLTLILALFIPDI, ISLIGGLAACFIFVFPGLCLI, and SWNAMVAYGVIMVTIGAFIFG.

It belongs to the amino acid/polyamine transporter 2 family.

It localises to the lysosome membrane. The protein localises to the cell projection. It is found in the axon. The enzyme catalyses L-asparagine(in) + Na(+)(in) = L-asparagine(out) + Na(+)(out). It catalyses the reaction L-glutamine(in) + Na(+)(in) = L-glutamine(out) + Na(+)(out). Functionally, symporter that selectively cotransports sodium ions and amino acids, such as L-glutamine and L-asparagine from the lysosome into the cytoplasm and may participates in mTORC1 activation. The transport activity requires an acidic lysosomal lumen. In Danio rerio (Zebrafish), this protein is Sodium-coupled neutral amino acid transporter 7.